A 618-amino-acid chain; its full sequence is Chaperone protein HtpG (618 aa).

Residues 1 to 340 (MATKHQFQTE…SEDLPLNVSR (340 aa)) are a; substrate-binding. Positions 341-545 (EILQQNKILA…KEDNNPMMAN (205 aa)) are b. The c stretch occupies residues 546–618 (LMAQMGQKVP…ELNSLLLQSL (73 aa)).

This sequence belongs to the heat shock protein 90 family. In terms of assembly, homodimer.

Its subcellular location is the cytoplasm. Functionally, molecular chaperone. Has ATPase activity. The chain is Chaperone protein HtpG from Helicobacter hepaticus (strain ATCC 51449 / 3B1).